A 292-amino-acid polypeptide reads, in one-letter code: Arabinose operon regulatory protein (292 aa).

Positions 8, 24, 38, 82, and 93 each coordinate alpha-L-arabinopyanose. Residues R180–G279 form the HTH araC/xylS-type domain. 2 consecutive DNA-binding regions (H-T-H motif) follow at residues A198–L219 and I246–T269.

In terms of assembly, homodimer.

It is found in the cytoplasm. Arabinose converts the repressor form of AraC to the activator form to regulate the araBAD promoter. In the absence of arabinose, AraC binds to the araO2 and araI1 half-sites in the promoter region of the araBAD operon, leading to the formation of a DNA loop that blocks access of RNA polymerase to the promoter. In the presence of arabinose and the cyclic AMP receptor protein (CRP), it binds to the adjacent half-sites araI1 and araI2, leading to the binding of RNA polymerase to the promoter region and transcription of the araBAD operon. AraI1 acts as a switch mechanism allowing both the repressor and the activator forms of AraC protein to regulate the araBAD promoter. Inhibited by D-fucose, which binds competitively to the same site on the protein. Its function is as follows. Transcription factor that regulates the expression of several genes involved in the transport and metabolism of L-arabinose. Functions both as a positive and a negative regulator. In the presence of arabinose, activates the expression of the araBAD, araE, araFGH and araJ promoters. In the absence of arabinose, negatively regulates the araBAD operon. Represses its own transcription. Acts by binding directly to DNA. The chain is Arabinose operon regulatory protein from Escherichia coli (strain K12).